A 300-amino-acid polypeptide reads, in one-letter code: Probable low-salt glycan biosynthesis reductase Agl14 (300 aa).

Residues 10 to 12 (GLL), 46 to 47 (DI), and 70 to 72 (AYT) contribute to the NADH site. NADPH contacts are provided by residues 11–12 (LL), 46–47 (DI), 70–72 (AYT), Tyr-109, Tyr-135, and Lys-139. The NADH site is built by Tyr-135 and Lys-139. Tyr-135 functions as the Proton donor/acceptor in the catalytic mechanism.

This sequence belongs to the dTDP-4-dehydrorhamnose reductase family.

It participates in protein modification; protein glycosylation. The protein operates within cell surface structure biogenesis; S-layer biogenesis. In terms of biological role, reductase involved in N-glycan biosynthetic pathway that takes place under low-salt conditions (1.75 M instead of 3.4 M). Participates in the formation of the tetrasaccharide present at 'Asn-532' of S-layer glycoprotein Csg, consisting of a sulfated hexose, 2 hexoses and rhamnose. Involved in the addition of final rhamnose (sugar 4) of the tetrasaccharide on the dolichol phosphate carrier. This chain is Probable low-salt glycan biosynthesis reductase Agl14 (agl14), found in Haloferax volcanii (strain ATCC 29605 / DSM 3757 / JCM 8879 / NBRC 14742 / NCIMB 2012 / VKM B-1768 / DS2) (Halobacterium volcanii).